Reading from the N-terminus, the 226-residue chain is Probable chemoreceptor glutamine deamidase CheD (226 aa).

The tract at residues 207-226 (PGGMRVERFDTPSRRDPVGA) is disordered.

The protein belongs to the CheD family.

The catalysed reaction is L-glutaminyl-[protein] + H2O = L-glutamyl-[protein] + NH4(+). Functionally, probably deamidates glutamine residues to glutamate on methyl-accepting chemotaxis receptors (MCPs), playing an important role in chemotaxis. The chain is Probable chemoreceptor glutamine deamidase CheD from Bordetella bronchiseptica (strain ATCC BAA-588 / NCTC 13252 / RB50) (Alcaligenes bronchisepticus).